Here is a 601-residue protein sequence, read N- to C-terminus: Multidrug and toxin extrusion protein 2 (601 aa).

The Cytoplasmic segment spans residues 1–62; it reads MNTAFAGFDE…PRGFWDEARA (62 aa). Residues 63-83 traverse the membrane as a helical segment; sequence LFVLSGPLFLFQVLNFLTYVV. Residues 84–95 lie on the Extracellular side of the membrane; that stretch reads GTVFCGHLGKVE. Residues 96–116 traverse the membrane as a helical segment; the sequence is LASVTLGVAFVNVCGVSVGAG. The Cytoplasmic segment spans residues 117 to 145; that stretch reads LSSACDTLMSQSFGSPNKKHVGVILQRGS. A helical membrane pass occupies residues 146 to 166; it reads LILLLCCLPCWALFLNTQHIL. Residues 167–182 lie on the Extracellular side of the membrane; that stretch reads LLFRQDPAVSRLTQDY. Residues 183–203 traverse the membrane as a helical segment; sequence AMIFIPGLPAIFLYSLLAKYL. The Cytoplasmic portion of the chain corresponds to 204 to 212; the sequence is QNQGIVWPQ. A helical transmembrane segment spans residues 213 to 233; the sequence is VLSGVVGNCVNGVANYALVSV. Residues 234–241 are Extracellular-facing; it reads LNLGVRGS. Residues 242–262 traverse the membrane as a helical segment; it reads AYANTISQFVQAAFLFLHIVL. Residues 263-281 lie on the Cytoplasmic side of the membrane; sequence KKLHLETWEGWSSQCLRDW. A helical transmembrane segment spans residues 282–301; the sequence is GPFLSLAIPSMLMMCVEWWA. The Extracellular segment spans residues 302-320; sequence YEIGSFLMGLLGVVDLSGQ. The chain crosses the membrane as a helical span at residues 321 to 341; it reads AIIYEVATVVYMIPMGLGMAV. Residues 342–361 are Cytoplasmic-facing; it reads CVRVGTALGAADTLQAKRSA. Residues 362-382 traverse the membrane as a helical segment; the sequence is VSGLLCTAGTSLVVGTLLGLL. Topologically, residues 383–402 are extracellular; that stretch reads NSQLGYIFTSDEEVIALVNQ. The helical transmembrane segment at 403–423 threads the bilayer; that stretch reads VLPIYIVFQLVEAVCCVFGGV. Residues 424-437 lie on the Cytoplasmic side of the membrane; it reads LRGTGKQAFGAIVN. Residues 438–458 traverse the membrane as a helical segment; it reads AIMYYIVGLPLGIVLTFVVGM. A topological domain (extracellular) is located at residue R459. A helical transmembrane segment spans residues 460–480; that stretch reads IMGLWLGMLTCIFLAAVTFVV. Residues 481 to 577 are Cytoplasmic-facing; it reads YAVQLDWKLA…LSVRQLLFRR (97 aa). The chain crosses the membrane as a helical span at residues 578–598; the sequence is GAALAASVAVLMAGLLVRVLT. The Extracellular portion of the chain corresponds to 599-601; sequence TGY.

It belongs to the multi antimicrobial extrusion (MATE) (TC 2.A.66.1) family. Expressed in renal cortical tissues.

Its subcellular location is the cell membrane. The protein localises to the apical cell membrane. It catalyses the reaction thiamine(out) + H(+)(in) = thiamine(in) + H(+)(out). It carries out the reaction estrone 3-sulfate(in) + H(+)(out) = estrone 3-sulfate(out) + H(+)(in). The enzyme catalyses creatinine(in) + H(+)(out) = creatinine(out) + H(+)(in). In terms of biological role, multidrug efflux pump that functions as a H(+)/organic cation antiporter. Mediates the efflux of cationic compounds, such as the model cations, tetraethylammonium (TEA) and 1-methyl-4-phenylpyridinium (MPP+), the platinum-based drug oxaliplatin or weak bases that are positively charged at physiological pH, cimetidine or the antidiabetic drug metformin. Mediates the efflux of the endogenous compounds creatinine, thiamine and estrone-3-sulfate. Plays a physiological role in the excretion of drugs, toxins and endogenous metabolites through the kidney. This is Multidrug and toxin extrusion protein 2 (SLC47A2) from Oryctolagus cuniculus (Rabbit).